Reading from the N-terminus, the 254-residue chain is Probable glutathione transferase omega-2 (254 aa).

One can recognise a GST N-terminal domain in the interval 25 to 105 (GTIRIYNMRY…YLDDIYPEPR (81 aa)). C35 (nucleophile) is an active-site residue. Residues K62, V75, and 89–90 (ES) each bind glutathione. One can recognise a GST C-terminal domain in the interval 110 to 239 (DHYEKVQQKL…SQPTETAVEF (130 aa)).

It belongs to the GST superfamily. Omega family.

It catalyses the reaction RX + glutathione = an S-substituted glutathione + a halide anion + H(+). It carries out the reaction L-dehydroascorbate + 2 glutathione = glutathione disulfide + L-ascorbate. The catalysed reaction is methylarsonate + 2 glutathione + H(+) = methylarsonous acid + glutathione disulfide + H2O. In terms of biological role, exhibits glutathione-dependent thiol transferase activity. Has dehydroascorbate reductase activity and may contribute to the recycling of ascorbic acid. Participates in the biotransformation of inorganic arsenic and reduces monomethylarsonic acid (MMA). The protein is Probable glutathione transferase omega-2 (gsto-2) of Caenorhabditis elegans.